The sequence spans 779 residues: Neutral ceramidase 1 (779 aa).

Ser-350 (nucleophile) is an active-site residue. N-linked (GlcNAc...) asparagine glycosylation is found at Asn-368, Asn-432, and Asn-667.

Belongs to the neutral ceramidase family. As to expression, mostly expressed in stems, leaves, roots and siliques, and, to a lower extent, in flowers.

The protein resides in the secreted. Its subcellular location is the endoplasmic reticulum. The protein localises to the golgi apparatus. It carries out the reaction an N-acylsphing-4-enine + H2O = sphing-4-enine + a fatty acid. Its function is as follows. Hydrolyzes the sphingolipid ceramide into sphingosine and free fatty acid. Regulates sphingolipid homeostasis. Promotes oxidative stress resistance. The sequence is that of Neutral ceramidase 1 from Arabidopsis thaliana (Mouse-ear cress).